We begin with the raw amino-acid sequence, 209 residues long: Guanylate kinase (209 aa).

The region spanning 5–184 is the Guanylate kinase-like domain; sequence GLLIVFSGPS…AAERVKRVIE (180 aa). 12-19 provides a ligand contact to ATP; it reads GPSGVGKG.

It belongs to the guanylate kinase family.

Its subcellular location is the cytoplasm. The catalysed reaction is GMP + ATP = GDP + ADP. Functionally, essential for recycling GMP and indirectly, cGMP. The polypeptide is Guanylate kinase (Streptococcus agalactiae serotype Ia (strain ATCC 27591 / A909 / CDC SS700)).